Consider the following 263-residue polypeptide: Oxygen-evolving enhancer protein 2-1, chloroplastic (263 aa).

Phosphoserine is present on S153.

It belongs to the PsbP family. Interacts with WAK1.

The protein resides in the plastid. It localises to the chloroplast thylakoid lumen. In terms of biological role, may be involved in the regulation of photosystem II. The protein is Oxygen-evolving enhancer protein 2-1, chloroplastic (PSBP1) of Arabidopsis thaliana (Mouse-ear cress).